The following is a 421-amino-acid chain: Medium-chain specific acyl-CoA dehydrogenase, mitochondrial (421 aa).

The transit peptide at methionine 1–threonine 25 directs the protein to the mitochondrion. Lysine 69 bears the N6-acetyllysine; alternate mark. Lysine 69 bears the N6-succinyllysine; alternate mark. Lysine 79 carries the post-translational modification N6-acetyllysine. Tyrosine 158–serine 167 lines the FAD pocket. Serine 167 serves as a coordination point for octanoyl-CoA. The residue at position 179 (lysine 179) is an N6-succinyllysine. An FAD-binding site is contributed by tryptophan 191 to threonine 193. Lysine 212 is subject to N6-acetyllysine; alternate. Lysine 212 carries the post-translational modification N6-succinyllysine; alternate. Serine 216 lines the octanoyl-CoA pocket. 3 positions are modified to N6-acetyllysine; alternate: lysine 217, lysine 259, and lysine 271. An N6-succinyllysine; alternate mark is found at lysine 217, lysine 259, and lysine 271. Residues aspartate 278 and arginine 281 each coordinate octanoyl-CoA. Lysine 301 is modified (N6-acetyllysine). Residues arginine 306 to threonine 308 and histidine 316 to glutamine 317 contribute to the FAD site. Arginine 349 and threonine 351 together coordinate octanoyl-CoA. Threonine 351 is subject to Phosphothreonine. Glutamine 374–glycine 378 provides a ligand contact to FAD. Residue glutamate 401 participates in octanoyl-CoA binding. Catalysis depends on glutamate 401, which acts as the Proton acceptor. Residue glycine 402 to glutamine 405 participates in FAD binding.

The protein belongs to the acyl-CoA dehydrogenase family. Homotetramer. Interacts with the heterodimeric electron transfer flavoprotein ETF. The cofactor is FAD. Acetylated. Could occur at proximity of the cofactor-binding sites and reduce the catalytic activity. Could be deacetylated by SIRT3.

Its subcellular location is the mitochondrion matrix. It carries out the reaction a medium-chain 2,3-saturated fatty acyl-CoA + oxidized [electron-transfer flavoprotein] + H(+) = a medium-chain (2E)-enoyl-CoA + reduced [electron-transfer flavoprotein]. The enzyme catalyses pentanoyl-CoA + oxidized [electron-transfer flavoprotein] + H(+) = (2E)-pentenoyl-CoA + reduced [electron-transfer flavoprotein]. It catalyses the reaction hexanoyl-CoA + oxidized [electron-transfer flavoprotein] + H(+) = (2E)-hexenoyl-CoA + reduced [electron-transfer flavoprotein]. The catalysed reaction is octanoyl-CoA + oxidized [electron-transfer flavoprotein] + H(+) = (2E)-octenoyl-CoA + reduced [electron-transfer flavoprotein]. It carries out the reaction decanoyl-CoA + oxidized [electron-transfer flavoprotein] + H(+) = (2E)-decenoyl-CoA + reduced [electron-transfer flavoprotein]. The enzyme catalyses dodecanoyl-CoA + oxidized [electron-transfer flavoprotein] + H(+) = (2E)-dodecenoyl-CoA + reduced [electron-transfer flavoprotein]. It catalyses the reaction tetradecanoyl-CoA + oxidized [electron-transfer flavoprotein] + H(+) = (2E)-tetradecenoyl-CoA + reduced [electron-transfer flavoprotein]. The catalysed reaction is oxidized [electron-transfer flavoprotein] + hexadecanoyl-CoA + H(+) = (2E)-hexadecenoyl-CoA + reduced [electron-transfer flavoprotein]. The protein operates within lipid metabolism; mitochondrial fatty acid beta-oxidation. Functionally, medium-chain specific acyl-CoA dehydrogenase is one of the acyl-CoA dehydrogenases that catalyze the first step of mitochondrial fatty acid beta-oxidation, an aerobic process breaking down fatty acids into acetyl-CoA and allowing the production of energy from fats. The first step of fatty acid beta-oxidation consists in the removal of one hydrogen from C-2 and C-3 of the straight-chain fatty acyl-CoA thioester, resulting in the formation of trans-2-enoyl-CoA. Electron transfer flavoprotein (ETF) is the electron acceptor that transfers electrons to the main mitochondrial respiratory chain via ETF-ubiquinone oxidoreductase (ETF dehydrogenase). Among the different mitochondrial acyl-CoA dehydrogenases, medium-chain specific acyl-CoA dehydrogenase acts specifically on acyl-CoAs with saturated 6 to 12 carbons long primary chains. The polypeptide is Medium-chain specific acyl-CoA dehydrogenase, mitochondrial (Rattus norvegicus (Rat)).